The primary structure comprises 152 residues: Catabolic 3-dehydroquinase 1 (152 aa).

The active-site Proton acceptor is the Tyr24. 3 residues coordinate substrate: Asn75, His81, and Asp88. Catalysis depends on His101, which acts as the Proton donor. Substrate is bound by residues 102-103 (VS) and Arg112.

It belongs to the type-II 3-dehydroquinase family. In terms of assembly, homododecamer. Adopts a ring-like structure, composed of an arrangement of two hexameric rings stacked on top of one another.

It carries out the reaction 3-dehydroquinate = 3-dehydroshikimate + H2O. It participates in aromatic compound metabolism; 3,4-dihydroxybenzoate biosynthesis; 3,4-dihydroxybenzoate from 3-dehydroquinate: step 1/2. Is involved in the catabolism of quinate. Allows the utilization of quinate as carbon source via the beta-ketoadipate pathway. This chain is Catabolic 3-dehydroquinase 1, found in Aspergillus terreus (strain NIH 2624 / FGSC A1156).